Consider the following 436-residue polypeptide: GTPase Der (436 aa).

EngA-type G domains are found at residues 4 to 167 (PTVA…PTEV) and 175 to 351 (IRFS…ESQN). Residues 10 to 17 (GRPNVGKS), 57 to 61 (DTGGI), 119 to 122 (NKVD), 181 to 188 (GRPNVGKS), 229 to 233 (DTAGM), and 294 to 297 (NKWD) each bind GTP. In terms of domain architecture, KH-like spans 352-436 (RRISSAVLND…PIHLIARKRK (85 aa)).

The protein belongs to the TRAFAC class TrmE-Era-EngA-EngB-Septin-like GTPase superfamily. EngA (Der) GTPase family. In terms of assembly, associates with the 50S ribosomal subunit.

GTPase that plays an essential role in the late steps of ribosome biogenesis. The sequence is that of GTPase Der from Streptococcus thermophilus (strain CNRZ 1066).